The primary structure comprises 294 residues: N-acetylmuramic acid 6-phosphate etherase (294 aa).

The region spanning 56–219 (TSYSLRNGGR…STLSMVSVGK (164 aa)) is the SIS domain. The Proton donor role is filled by E84. Residue E115 is part of the active site.

Belongs to the GCKR-like family. MurNAc-6-P etherase subfamily. As to quaternary structure, homodimer.

It catalyses the reaction N-acetyl-D-muramate 6-phosphate + H2O = N-acetyl-D-glucosamine 6-phosphate + (R)-lactate. The protein operates within amino-sugar metabolism; 1,6-anhydro-N-acetylmuramate degradation. Its pathway is amino-sugar metabolism; N-acetylmuramate degradation. It participates in cell wall biogenesis; peptidoglycan recycling. In terms of biological role, specifically catalyzes the cleavage of the D-lactyl ether substituent of MurNAc 6-phosphate, producing GlcNAc 6-phosphate and D-lactate. Together with AnmK, is also required for the utilization of anhydro-N-acetylmuramic acid (anhMurNAc) either imported from the medium or derived from its own cell wall murein, and thus plays a role in cell wall recycling. This is N-acetylmuramic acid 6-phosphate etherase from Francisella tularensis subsp. holarctica (strain LVS).